We begin with the raw amino-acid sequence, 505 residues long: Lysine--tRNA ligase (505 aa).

Residues glutamate 415 and glutamate 422 each coordinate Mg(2+).

The protein belongs to the class-II aminoacyl-tRNA synthetase family. In terms of assembly, homodimer. Mg(2+) serves as cofactor.

It localises to the cytoplasm. It carries out the reaction tRNA(Lys) + L-lysine + ATP = L-lysyl-tRNA(Lys) + AMP + diphosphate. This chain is Lysine--tRNA ligase, found in Shigella boydii serotype 4 (strain Sb227).